A 544-amino-acid chain; its full sequence is Chromatin assembly factor 1 subunit A (544 aa).

Residues 1 to 22 are compositionally biased toward polar residues; that stretch reads MNSESVDSDVAASTSNKGNELC. Disordered regions lie at residues 1–52, 67–117, and 138–160; these read MNSE…EADE, IYNG…REQE, and QEQQ…AQRL. Residues 23–35 are compositionally biased toward low complexity; it reads SSSTDITSLSVSS. The segment covering 36 to 47 has biased composition (polar residues); that stretch reads PNESVIHSSHSA. Residues 56-170 are interaction with DNA and pcn1/PCNA; sequence KLSYEGNRKK…RQEQILNKER (115 aa). A compositionally biased stretch (basic and acidic residues) spans 74-117; that stretch reads AGKEKKLQKQRAQEERIRQKEAERLKREKERQQREQEKKLREQE. A coiled-coil region spans residues 76–176; it reads KEKKLQKQRA…NKERQQLKLN (101 aa). Residues 172–179 carry the PCNA-interaction protein (PIP box) motif; it reads QLKLNNFF. The segment at 325–396 is interaction with histones H3/H4; it reads SNVLLNPWLE…DKDSVNASNT (72 aa). Residues 351–388 are compositionally biased toward acidic residues; it reads DEEDDGEDLESEDEEVDNSDDIVEDGDNAFVDDEDDDK. The interval 351–400 is disordered; it reads DEEDDGEDLESEDEEVDNSDDIVEDGDNAFVDDEDDDKDSVNASNTHRSS.

The protein belongs to the RLF2 family. In terms of assembly, component of chromatin assembly factor 1 (CAF-1), composed of pcf1, pcf2 and pcf3. Interacts (via PIP motif) with pcn1/PCNA; the interaction is direct and occurs during S-phase. Interacts with swi6 at the G1/S-phase transition and early S-phase, but not in the G2 phase. The CAF-1 complex interacts with histone H3/H4 dimers.

It is found in the nucleus. Functionally, acts as a component of the histone chaperone complex chromatin assembly factor 1 (CAF-1), which assembles histone octamers onto DNA during replication and repair. CAF-1 performs the first step of the nucleosome assembly process, bringing newly synthesized histones H3 and H4 to replicating DNA; histones H2A/H2B can bind to this chromatin precursor subsequent to DNA replication to complete the histone octamer. Plays a role in the maintenance of heterochromatin. In Schizosaccharomyces pombe (strain 972 / ATCC 24843) (Fission yeast), this protein is Chromatin assembly factor 1 subunit A.